A 195-amino-acid chain; its full sequence is MAKSSRATLALLIYGILMRYSQCTPIGMGFPNMRLDNDVFGDEGNSLSELSYEPDTMSARSRPALPEDAYTLYYPPERRAETHADGLLDRALRDILVQLSARKYLHSLTAVRVGEEEEDEEDSEPLSKRHSDGIFTDSYSRYRKQMAVKKYLAAVLGRRYRQRFRNKGRRLVVPSVWTGIRDTVIITPEKRGKRY.

Positions 1–20 (MAKSSRATLALLIYGILMRY) are cleaved as a signal peptide. A propeptide spanning residues 21-82 (SQCTPIGMGF…YYPPERRAET (62 aa)) is cleaved from the precursor. The interval 113 to 132 (VGEEEEDEEDSEPLSKRHSD) is disordered. The segment covering 115-124 (EEEEDEEDSE) has biased composition (acidic residues). Lys167 is modified (lysine amide). A propeptide spanning residues 171–195 (LVVPSVWTGIRDTVIITPEKRGKRY) is cleaved from the precursor.

It belongs to the glucagon family. In terms of tissue distribution, brain, testis, ovary and stomach. Not pancreas, pituitary, muscle and liver.

The protein resides in the secreted. Functionally, primary role of GHRH is to release GH from the pituitary. Its function is as follows. PACAP plays pivotal roles as a neurotransmitter and/or a neuromodulator. The protein is Glucagon family neuropeptides of Clarias macrocephalus (Bighead catfish).